A 63-amino-acid chain; its full sequence is Putative ankyrin repeat protein RF_p14 (63 aa).

ANK repeat units follow at residues 11–43 (KLNQKLMRAAATGDIEAVQKLVLRGADIYCRDH) and 44–63 (QGDTALSLAAGSGYLDILDI).

The chain is Putative ankyrin repeat protein RF_p14 from Rickettsia felis (strain ATCC VR-1525 / URRWXCal2) (Rickettsia azadi).